We begin with the raw amino-acid sequence, 297 residues long: Phosphoribosylaminoimidazole-succinocarboxamide synthase (297 aa).

This sequence belongs to the SAICAR synthetase family.

It carries out the reaction 5-amino-1-(5-phospho-D-ribosyl)imidazole-4-carboxylate + L-aspartate + ATP = (2S)-2-[5-amino-1-(5-phospho-beta-D-ribosyl)imidazole-4-carboxamido]succinate + ADP + phosphate + 2 H(+). The protein operates within purine metabolism; IMP biosynthesis via de novo pathway; 5-amino-1-(5-phospho-D-ribosyl)imidazole-4-carboxamide from 5-amino-1-(5-phospho-D-ribosyl)imidazole-4-carboxylate: step 1/2. The chain is Phosphoribosylaminoimidazole-succinocarboxamide synthase from Methylobacillus flagellatus (strain ATCC 51484 / DSM 6875 / VKM B-1610 / KT).